Consider the following 170-residue polypeptide: Shikimate kinase (170 aa).

11–16 lines the ATP pocket; that stretch reads LSGKST. Ser15 is a Mg(2+) binding site. The substrate site is built by Asp33, Arg57, and Gly79. Position 119 (Arg119) interacts with ATP. Arg137 lines the substrate pocket.

Belongs to the shikimate kinase family. In terms of assembly, monomer. Mg(2+) serves as cofactor.

It is found in the cytoplasm. The enzyme catalyses shikimate + ATP = 3-phosphoshikimate + ADP + H(+). It functions in the pathway metabolic intermediate biosynthesis; chorismate biosynthesis; chorismate from D-erythrose 4-phosphate and phosphoenolpyruvate: step 5/7. Its function is as follows. Catalyzes the specific phosphorylation of the 3-hydroxyl group of shikimic acid using ATP as a cosubstrate. The protein is Shikimate kinase of Clostridium botulinum (strain Loch Maree / Type A3).